The following is a 497-amino-acid chain: Probable cytosol aminopeptidase (497 aa).

Mn(2+)-binding residues include lysine 268 and aspartate 273. The active site involves lysine 280. The Mn(2+) site is built by aspartate 291, aspartate 350, and glutamate 352. The active site involves arginine 354.

This sequence belongs to the peptidase M17 family. Requires Mn(2+) as cofactor.

It is found in the cytoplasm. The catalysed reaction is Release of an N-terminal amino acid, Xaa-|-Yaa-, in which Xaa is preferably Leu, but may be other amino acids including Pro although not Arg or Lys, and Yaa may be Pro. Amino acid amides and methyl esters are also readily hydrolyzed, but rates on arylamides are exceedingly low.. It catalyses the reaction Release of an N-terminal amino acid, preferentially leucine, but not glutamic or aspartic acids.. Presumably involved in the processing and regular turnover of intracellular proteins. Catalyzes the removal of unsubstituted N-terminal amino acids from various peptides. The polypeptide is Probable cytosol aminopeptidase (Alkalilimnicola ehrlichii (strain ATCC BAA-1101 / DSM 17681 / MLHE-1)).